We begin with the raw amino-acid sequence, 475 residues long: Ribulose bisphosphate carboxylase large chain (475 aa).

The propeptide occupies 1 to 2; the sequence is MS. Pro-3 bears the N-acetylproline mark. At Lys-14 the chain carries N6,N6,N6-trimethyllysine. Substrate is bound by residues Asn-123 and Thr-173. Lys-175 functions as the Proton acceptor in the catalytic mechanism. Substrate is bound at residue Lys-177. Residues Lys-201, Asp-203, and Glu-204 each contribute to the Mg(2+) site. Lys-201 is subject to N6-carboxylysine. His-294 functions as the Proton acceptor in the catalytic mechanism. Residues Arg-295, His-327, and Ser-379 each coordinate substrate.

The protein belongs to the RuBisCO large chain family. Type I subfamily. Heterohexadecamer of 8 large chains and 8 small chains; disulfide-linked. The disulfide link is formed within the large subunit homodimers. Requires Mg(2+) as cofactor. Post-translationally, the disulfide bond which can form in the large chain dimeric partners within the hexadecamer appears to be associated with oxidative stress and protein turnover.

It is found in the plastid. The protein resides in the chloroplast. The catalysed reaction is 2 (2R)-3-phosphoglycerate + 2 H(+) = D-ribulose 1,5-bisphosphate + CO2 + H2O. It carries out the reaction D-ribulose 1,5-bisphosphate + O2 = 2-phosphoglycolate + (2R)-3-phosphoglycerate + 2 H(+). Functionally, ruBisCO catalyzes two reactions: the carboxylation of D-ribulose 1,5-bisphosphate, the primary event in carbon dioxide fixation, as well as the oxidative fragmentation of the pentose substrate in the photorespiration process. Both reactions occur simultaneously and in competition at the same active site. The sequence is that of Ribulose bisphosphate carboxylase large chain from Oenothera argillicola (Appalachian evening primrose).